The primary structure comprises 133 residues: uncharacterized protein (133 aa).

This is an uncharacterized protein from Rickettsia conorii (strain ATCC VR-613 / Malish 7).